Here is a 593-residue protein sequence, read N- to C-terminus: AT-rich interactive domain-containing protein 3A (593 aa).

Positions 14–222 (QQRARQELEA…PQLQPPDHGD (209 aa)) are disordered. Basic and acidic residues predominate over residues 41–53 (AAPDEDREPESAR). The span at 54-87 (MQRAQMAALAAMRAAAAGLGHPASPGGSEDGPPG) shows a compositional bias: low complexity. Phosphoserine occurs at positions 77, 81, and 88. Position 98 is a phosphothreonine (threonine 98). Phosphoserine is present on residues serine 101 and serine 119. A compositionally biased stretch (basic and acidic residues) spans 104-127 (RGREGPGEEHFEDMASDEDMKPKW). The acidic stretch occupies residues 119 to 156 (SDEDMKPKWEEEEMEEDLGEDEEEEEEDYEDEEEEEDE). Positions 128-158 (EEEEMEEDLGEDEEEEEEDYEDEEEEEDEEG) are enriched in acidic residues. In terms of domain architecture, ARID spans 238-330 (DPKRKEFLDD…YLYPYECEKR (93 aa)). Residues serine 353 and serine 362 each carry the phosphoserine modification. Glycyl lysine isopeptide (Lys-Gly) (interchain with G-Cter in SUMO2) cross-links involve residues lysine 398, lysine 399, lysine 452, and lysine 462. Residues 444–541 (AALEQLREKL…GVLFAQPPAP (98 aa)) form the REKLES domain. Residues 445-488 (ALEQLREKLESAEPPEKKMALVADEQQRLMQRALQQNFLAMAAQ) form an important for nuclear localization region. The tract at residues 490–513 (PMSIRINSQASESRQDSAVNLTGT) is homodimerization. Disordered regions lie at residues 497–516 (SQASESRQDSAVNLTGTNGS) and 539–593 (PAPT…NSLP). Positions 537–557 (QPPAPTPTSAPNKGGGGGGGS) are important for cytoplasmic localization. The segment covering 549–576 (KGGGGGGGSSSNAGGRGGNTGTSGGQAG) has biased composition (gly residues). Positions 580-593 (LSTPSTSTSNNSLP) are enriched in low complexity.

In terms of assembly, homodimer. Heterodimer with ARID3B. Interacts with E2F1. Interacts with GTF2I and BTK. As to expression, widely expressed, with highest expression in skeletal muscle, thalamus, and colon.

The protein localises to the nucleus. It is found in the cytoplasm. Transcription factor which may be involved in the control of cell cycle progression by the RB1/E2F1 pathway and in B-cell differentiation. This chain is AT-rich interactive domain-containing protein 3A (ARID3A), found in Homo sapiens (Human).